Reading from the N-terminus, the 91-residue chain is Putative regulatory protein CLB_2388 (91 aa).

Belongs to the RemA family.

This Clostridium botulinum (strain ATCC 19397 / Type A) protein is Putative regulatory protein CLB_2388.